We begin with the raw amino-acid sequence, 555 residues long: Putative ankyrin repeat protein L283 (555 aa).

4 ANK repeats span residues 364–389 (TKVN…EDDI), 390–420 (VFKK…DINE), 422–447 (IKLA…KVRC), and 455–488 (GYLE…EGGK).

The sequence is that of Putative ankyrin repeat protein L283 from Acanthamoeba polyphaga mimivirus (APMV).